A 368-amino-acid polypeptide reads, in one-letter code: tRNA-specific 2-thiouridylase MnmA (368 aa).

ATP contacts are provided by residues 11-18 (GMSGGVDS) and Met-37. The segment at 97–99 (NPD) is interaction with target base in tRNA. Cys-102 serves as the catalytic Nucleophile. Cys-102 and Cys-199 are oxidised to a cystine. Gly-127 contacts ATP. The segment at 149-151 (KDQ) is interaction with tRNA. The Cysteine persulfide intermediate role is filled by Cys-199. An interaction with tRNA region spans residues 311-312 (RY).

The protein belongs to the MnmA/TRMU family. Interacts with TusE.

The protein localises to the cytoplasm. The catalysed reaction is S-sulfanyl-L-cysteinyl-[protein] + uridine(34) in tRNA + AH2 + ATP = 2-thiouridine(34) in tRNA + L-cysteinyl-[protein] + A + AMP + diphosphate + H(+). In terms of biological role, catalyzes the 2-thiolation of uridine at the wobble position (U34) of tRNA(Lys), tRNA(Glu) and tRNA(Gln), leading to the formation of s(2)U34, the first step of tRNA-mnm(5)s(2)U34 synthesis. Sulfur is provided by IscS, via a sulfur-relay system. Binds ATP and its substrate tRNAs. The polypeptide is tRNA-specific 2-thiouridylase MnmA (Salmonella paratyphi B (strain ATCC BAA-1250 / SPB7)).